The chain runs to 225 residues: Leucyl/phenylalanyl-tRNA--protein transferase (225 aa).

The protein belongs to the L/F-transferase family.

It is found in the cytoplasm. The enzyme catalyses N-terminal L-lysyl-[protein] + L-leucyl-tRNA(Leu) = N-terminal L-leucyl-L-lysyl-[protein] + tRNA(Leu) + H(+). It carries out the reaction N-terminal L-arginyl-[protein] + L-leucyl-tRNA(Leu) = N-terminal L-leucyl-L-arginyl-[protein] + tRNA(Leu) + H(+). The catalysed reaction is L-phenylalanyl-tRNA(Phe) + an N-terminal L-alpha-aminoacyl-[protein] = an N-terminal L-phenylalanyl-L-alpha-aminoacyl-[protein] + tRNA(Phe). In terms of biological role, functions in the N-end rule pathway of protein degradation where it conjugates Leu, Phe and, less efficiently, Met from aminoacyl-tRNAs to the N-termini of proteins containing an N-terminal arginine or lysine. This Gluconobacter oxydans (strain 621H) (Gluconobacter suboxydans) protein is Leucyl/phenylalanyl-tRNA--protein transferase.